We begin with the raw amino-acid sequence, 461 residues long: MAVLTHSRRALSTNPLKTSAPLGAAMAYLGIEGAVPLFHGAQGCTAFGVVHLVRHFKEAVPLQTTAMNEVSTILGGGEQIEEAIDNIRKRANPKFIGIASTALTETRGEDIAGELRAMQVRRKDWVGTAVVHVITPDFEGGQQDGWAKAVEAIVAALVPVTAERDPDLRQVTLLVPSCFTTAEIDEAVRMIRAFGLSPIVLPDLSTSLDGHLSDDWSGHSLGGTRLDDIARIPRSAVTLAIGEQMRAAAPMIEDRALVPYRVFQSLTGLKVVDAFVRVLMELSGMQDPPPSTKRDRARMMDAALDAHFFTGGLRVAIGADPDLMFALSTALVSMGAEIVTAVTTTQNSALIEKMPCAEVILGDLGDVERGAGQAEAQILITHSHGRHAAAALHLPLVRAGFPIFDRIGAQDTCRIGYRGTRAFFFEIANAMQAIHHRPRPEDFGAAPIPQEFDHVPHPAPC.

C44 contacts [7Fe-Mo-9S-C-homocitryl] cluster.

It belongs to the NifD/NifK/NifE/NifN family.

The protein operates within cofactor biosynthesis; Fe-Mo cofactor biosynthesis. This protein may play a role in the biosynthesis of the prosthetic group of nitrogenase (FeMo cofactor). The chain is Nitrogenase iron-molybdenum cofactor biosynthesis protein NifN (nifN) from Rhodobacter capsulatus (Rhodopseudomonas capsulata).